Here is a 124-residue protein sequence, read N- to C-terminus: Large ribosomal subunit protein bL12 (124 aa).

The protein belongs to the bacterial ribosomal protein bL12 family. Homodimer. Part of the ribosomal stalk of the 50S ribosomal subunit. Forms a multimeric L10(L12)X complex, where L10 forms an elongated spine to which 2 to 4 L12 dimers bind in a sequential fashion. Binds GTP-bound translation factors.

Its function is as follows. Forms part of the ribosomal stalk which helps the ribosome interact with GTP-bound translation factors. Is thus essential for accurate translation. The protein is Large ribosomal subunit protein bL12 of Anaeromyxobacter dehalogenans (strain 2CP-C).